A 429-amino-acid polypeptide reads, in one-letter code: D-amino acid dehydrogenase (429 aa).

Residue 3–17 (VLILGSGVIGTTTAW) coordinates FAD.

Belongs to the DadA oxidoreductase family. The cofactor is FAD.

It carries out the reaction a D-alpha-amino acid + A + H2O = a 2-oxocarboxylate + AH2 + NH4(+). Its pathway is amino-acid degradation; D-alanine degradation; NH(3) and pyruvate from D-alanine: step 1/1. Oxidative deamination of D-amino acids. The sequence is that of D-amino acid dehydrogenase from Xanthomonas campestris pv. campestris (strain 8004).